A 312-amino-acid polypeptide reads, in one-letter code: Malate dehydrogenase (312 aa).

Residues glycine 10–glycine 15 and aspartate 34 contribute to the NAD(+) site. Residues arginine 85 and arginine 91 each coordinate substrate. NAD(+) contacts are provided by residues asparagine 98 and leucine 121–asparagine 123. Substrate-binding residues include asparagine 123 and arginine 154. Catalysis depends on histidine 178, which acts as the Proton acceptor.

The protein belongs to the LDH/MDH superfamily. MDH type 3 family.

It catalyses the reaction (S)-malate + NAD(+) = oxaloacetate + NADH + H(+). Functionally, catalyzes the reversible oxidation of malate to oxaloacetate. The protein is Malate dehydrogenase of Staphylococcus saprophyticus subsp. saprophyticus (strain ATCC 15305 / DSM 20229 / NCIMB 8711 / NCTC 7292 / S-41).